The chain runs to 388 residues: Spermosin (388 aa).

A signal peptide spans 1–22; it reads MAAINVIFISGAIALFALTGSC. Polar residues predominate over residues 29–49; that stretch reads FTNKPYATQNPYSPPQTNQPT. A disordered region spans residues 29-98; it reads FTNKPYATQN…SENSESENSE (70 aa). Pro residues predominate over residues 54 to 64; the sequence is QPGPAPTPAPY. 5 disulfide bridges follow: Cys116–Cys251, Cys163–Cys179, Cys265–Cys330, Cys295–Cys310, and Cys320–Cys349. The Peptidase S1 domain maps to 130–372; the sequence is IVGGAEAVPN…NLEWLCCYMP (243 aa). Active-site charge relay system residues include His178 and Asp231. Ser324 (charge relay system) is an active-site residue.

The protein belongs to the peptidase S1 family. In terms of assembly, heterodimer of a heavy chain and either an L1 light chain or an L2 light chain linked by a disulfide bond. As to expression, detected in sperm, but not in unfertilized eggs (at protein level). Expressed in gonad, but not in hepatopancreas, intestine or branchial basket.

It is found in the secreted. The catalysed reaction is Hydrolyzes arginyl bonds, preferably with Pro in the P2 position.. With respect to regulation, inhibited by peptidyl-argininals with Pro in the P2 position, diisopropyl fluorophosphate, phenylmethanesulfonyl fluoride, leupeptin, antipain, soybean trypsin inhibitor, aprotinin, ovomucoid, valyl-prolyl-arginyl-chloromethane, glycyl-valyl-arginyl-chloromethane, p-aminobenzamidine, benzamidine, zinc chloride and mercuric chloride. In terms of biological role, trypsin-like protease with a narrow substrate specificity. Preferentially hydrolyzes substrates with Pro in the P2 position and Val in the P3 position. Plays a role in fertilization. In Halocynthia roretzi (Sea squirt), this protein is Spermosin.